Consider the following 192-residue polypeptide: Peptidyl-tRNA hydrolase (192 aa).

Tyrosine 14 serves as a coordination point for tRNA. Catalysis depends on histidine 19, which acts as the Proton acceptor. Residues tyrosine 64, asparagine 66, and asparagine 112 each coordinate tRNA.

Belongs to the PTH family. In terms of assembly, monomer.

The protein localises to the cytoplasm. It catalyses the reaction an N-acyl-L-alpha-aminoacyl-tRNA + H2O = an N-acyl-L-amino acid + a tRNA + H(+). In terms of biological role, hydrolyzes ribosome-free peptidyl-tRNAs (with 1 or more amino acids incorporated), which drop off the ribosome during protein synthesis, or as a result of ribosome stalling. Its function is as follows. Catalyzes the release of premature peptidyl moieties from peptidyl-tRNA molecules trapped in stalled 50S ribosomal subunits, and thus maintains levels of free tRNAs and 50S ribosomes. This Anaeromyxobacter sp. (strain K) protein is Peptidyl-tRNA hydrolase.